The primary structure comprises 341 residues: MNNYLRKLVEGQHLTEEEMYKAGLLLLNENILESEIAAFLVLLKAKGETAEEIYGLVRALREKALPFSNHIQGAMDNCGTGGDGAQTFNISTTSAFVLAGAGVKVAKHGNRAVSSKTGSADLLEELGVNISSTPNEIDYLLEHVGIAFLFAPAMHPALKRIMKIRKELNVPTIFNLIGPLTNPVNLETQFVGIYKRDMLLPVAQVLQKLGRKQALVVNGSGFLDEASLQGENHVVILKDNEIVETSIEPEKYGFSIVKNEEIRGGNSKENAKITLGVLSGEKSVYRDTVLFNAGLALFANGKAKTIEEGITLAAHSIDSGKALAKLNLLIAASNEELERVN.

Residues Gly-79, 82-83 (GD), Thr-87, 89-92 (NIST), 107-115 (KHGNRAVSS), and Ser-119 each bind 5-phospho-alpha-D-ribose 1-diphosphate. Anthranilate is bound at residue Gly-79. A Mg(2+)-binding site is contributed by Ser-91. Asn-110 provides a ligand contact to anthranilate. Arg-165 is a binding site for anthranilate. Mg(2+)-binding residues include Asp-224 and Glu-225.

It belongs to the anthranilate phosphoribosyltransferase family. In terms of assembly, homodimer. Mg(2+) is required as a cofactor.

The enzyme catalyses N-(5-phospho-beta-D-ribosyl)anthranilate + diphosphate = 5-phospho-alpha-D-ribose 1-diphosphate + anthranilate. Its pathway is amino-acid biosynthesis; L-tryptophan biosynthesis; L-tryptophan from chorismate: step 2/5. Its function is as follows. Catalyzes the transfer of the phosphoribosyl group of 5-phosphorylribose-1-pyrophosphate (PRPP) to anthranilate to yield N-(5'-phosphoribosyl)-anthranilate (PRA). This Bacillus cereus (strain AH820) protein is Anthranilate phosphoribosyltransferase.